The sequence spans 293 residues: uncharacterized protein (293 aa).

Positions 1 to 58 constitute an HTH lysR-type domain; the sequence is MELKQLITFITAAEHVNFTLTAKMLNYAQSSVTSQIKSLEEEIGTPLFERLGKRLILT. The H-T-H motif DNA-binding region spans 18 to 37; that stretch reads FTLTAKMLNYAQSSVTSQIK.

It belongs to the LysR transcriptional regulatory family.

It localises to the cytoplasm. This is an uncharacterized protein from Bacillus subtilis (strain 168).